Reading from the N-terminus, the 144-residue chain is Cell division protein SepF (144 aa).

Residues 14–31 (EDDEMNEVPYTESEEQQE) are compositionally biased toward acidic residues. The segment at 14-41 (EDDEMNEVPYTESEEQQEEIPQTQKNER) is disordered.

This sequence belongs to the SepF family. In terms of assembly, homodimer. Interacts with FtsZ.

It localises to the cytoplasm. Functionally, cell division protein that is part of the divisome complex and is recruited early to the Z-ring. Probably stimulates Z-ring formation, perhaps through the cross-linking of FtsZ protofilaments. Its function overlaps with FtsA. This is Cell division protein SepF from Lactobacillus johnsonii (strain CNCM I-12250 / La1 / NCC 533).